The primary structure comprises 359 residues: NADH-quinone oxidoreductase subunit H (359 aa).

8 helical membrane passes run 16-36 (IWPA…AVLA), 94-114 (GLFI…WAVI), 128-148 (GLLF…IAGW), 167-187 (VSYE…SGSL), 205-225 (GLTF…VYFI), 261-281 (FFLA…LLFL), 296-316 (IPGW…FLWV), and 331-351 (LGWK…GAWM).

Belongs to the complex I subunit 1 family. In terms of assembly, NDH-1 is composed of 14 different subunits. Subunits NuoA, H, J, K, L, M, N constitute the membrane sector of the complex.

The protein resides in the cell inner membrane. It catalyses the reaction a quinone + NADH + 5 H(+)(in) = a quinol + NAD(+) + 4 H(+)(out). In terms of biological role, NDH-1 shuttles electrons from NADH, via FMN and iron-sulfur (Fe-S) centers, to quinones in the respiratory chain. The immediate electron acceptor for the enzyme in this species is believed to be ubiquinone. Couples the redox reaction to proton translocation (for every two electrons transferred, four hydrogen ions are translocated across the cytoplasmic membrane), and thus conserves the redox energy in a proton gradient. This subunit may bind ubiquinone. This Polaromonas naphthalenivorans (strain CJ2) protein is NADH-quinone oxidoreductase subunit H.